A 215-amino-acid chain; its full sequence is Adenylate kinase (215 aa).

10–15 (GAGKGT) serves as a coordination point for ATP. The tract at residues 30-59 (STGDMLRAAVKAGSPLGQQVKGVMDSGGLV) is NMP. AMP-binding positions include Thr-31, Arg-36, 57 to 59 (GLV), 85 to 88 (GFPR), and Gln-92. The LID stretch occupies residues 122 to 159 (GRRVHPASGRVYHTEHNPPKVAGKDDVTGEELIQREDD). Residues Arg-123 and 132–133 (VY) each bind ATP. AMP-binding residues include Arg-156 and Arg-167. Gly-201 serves as a coordination point for ATP.

The protein belongs to the adenylate kinase family. In terms of assembly, monomer.

The protein resides in the cytoplasm. The enzyme catalyses AMP + ATP = 2 ADP. It participates in purine metabolism; AMP biosynthesis via salvage pathway; AMP from ADP: step 1/1. In terms of biological role, catalyzes the reversible transfer of the terminal phosphate group between ATP and AMP. Plays an important role in cellular energy homeostasis and in adenine nucleotide metabolism. This Pseudomonas aeruginosa (strain LESB58) protein is Adenylate kinase.